Here is a 398-residue protein sequence, read N- to C-terminus: Fe-regulated protein 8 (398 aa).

Its function is as follows. Protein of unknown function; part of the gene cluster that mediates the biosynthesis of siderophore ferrichrome A which is contributing to organismal virulence. This Mycosarcoma maydis (Corn smut fungus) protein is Fe-regulated protein 8.